A 99-amino-acid polypeptide reads, in one-letter code: Large ribosomal subunit protein uL23 (99 aa).

It belongs to the universal ribosomal protein uL23 family. As to quaternary structure, part of the 50S ribosomal subunit. Contacts protein L29, and trigger factor when it is bound to the ribosome.

Its function is as follows. One of the early assembly proteins it binds 23S rRNA. One of the proteins that surrounds the polypeptide exit tunnel on the outside of the ribosome. Forms the main docking site for trigger factor binding to the ribosome. This is Large ribosomal subunit protein uL23 from Alkalilimnicola ehrlichii (strain ATCC BAA-1101 / DSM 17681 / MLHE-1).